Reading from the N-terminus, the 324-residue chain is tRNA-modifying protein YgfZ (324 aa).

Trp-184 is a folate binding site.

The protein belongs to the tRNA-modifying YgfZ family.

The protein resides in the cytoplasm. In terms of biological role, folate-binding protein involved in regulating the level of ATP-DnaA and in the modification of some tRNAs. It is probably a key factor in regulatory networks that act via tRNA modification, such as initiation of chromosomal replication. The protein is tRNA-modifying protein YgfZ of Vibrio vulnificus (strain CMCP6).